Here is a 391-residue protein sequence, read N- to C-terminus: Arginine biosynthesis bifunctional protein ArgJ (391 aa).

Residues Thr-149, Lys-172, Thr-183, Glu-263, Asn-386, and Ser-391 each contribute to the substrate site. The Nucleophile role is filled by Thr-183.

The protein belongs to the ArgJ family. As to quaternary structure, heterotetramer of two alpha and two beta chains.

The protein resides in the cytoplasm. The enzyme catalyses N(2)-acetyl-L-ornithine + L-glutamate = N-acetyl-L-glutamate + L-ornithine. It carries out the reaction L-glutamate + acetyl-CoA = N-acetyl-L-glutamate + CoA + H(+). It functions in the pathway amino-acid biosynthesis; L-arginine biosynthesis; L-ornithine and N-acetyl-L-glutamate from L-glutamate and N(2)-acetyl-L-ornithine (cyclic): step 1/1. It participates in amino-acid biosynthesis; L-arginine biosynthesis; N(2)-acetyl-L-ornithine from L-glutamate: step 1/4. In terms of biological role, catalyzes two activities which are involved in the cyclic version of arginine biosynthesis: the synthesis of N-acetylglutamate from glutamate and acetyl-CoA as the acetyl donor, and of ornithine by transacetylation between N(2)-acetylornithine and glutamate. The chain is Arginine biosynthesis bifunctional protein ArgJ from Bifidobacterium longum (strain NCC 2705).